Consider the following 1009-residue polypeptide: Lateral signaling target protein 2 homolog (1009 aa).

3 disordered regions span residues 313 to 460, 497 to 629, and 777 to 905; these read PVGS…EEQL, ASED…KRCS, and MQRN…TATA. Low complexity-rich tracts occupy residues 327–348, 364–398, and 406–427; these read SSTPTTSSNNNNNNKSSSSSSG, QRNNNNNQQNSNESTTLPPRSPSMLSLSASSTPTA, and PSHSIASTTSSAASSNSTHPPA. Positions 430 to 458 are enriched in acidic residues; that stretch reads SDGDDEDEDEEEDEEEDELEDTEDDTDEE. The residue at position 541 (S541) is a Phosphoserine. Over residues 544–558 the composition is skewed to basic and acidic residues; the sequence is SEPHRDQGETIKSTE. Positions 562-575 are enriched in low complexity; it reads QQQQQQEQQTLQSS. 2 stretches are compositionally biased toward basic residues: residues 576-601 and 609-627; these read RQRHSHSHSHSHRHHHRHHHHHHHST and QPHHHQPHPHRLTRSGRKR. The segment covering 780–798 has biased composition (low complexity); the sequence is NNTIDNPSSSNTSSSSATT. S807 is modified (phosphoserine). Low complexity predominate over residues 822–878; it reads VHQQEQEMQQQQDHQQQQHQHQVQVQLQRQRNNSVGSNTPSSASSTSSSSEQNSPVS. Residues 917 to 977 form an FYVE-type zinc finger; it reads DGKAPRCMSC…VCRDCYVREV (61 aa). 8 residues coordinate Zn(2+): C923, C926, C939, C942, C947, C950, C969, and C972.

It belongs to the lst-2 family.

In terms of biological role, negative regulator of epidermal growth factor receptor (EGFR) signaling. The chain is Lateral signaling target protein 2 homolog from Drosophila persimilis (Fruit fly).